The following is a 258-amino-acid chain: UPF0246 protein Pnuc_0753 (258 aa).

This sequence belongs to the UPF0246 family.

The chain is UPF0246 protein Pnuc_0753 from Polynucleobacter asymbioticus (strain DSM 18221 / CIP 109841 / QLW-P1DMWA-1) (Polynucleobacter necessarius subsp. asymbioticus).